Here is a 194-residue protein sequence, read N- to C-terminus: Thioredoxin O1, mitochondrial (194 aa).

The N-terminal 42 residues, 1–42 (MKGNWSIVRKVLHRQFSTLRSSTPSSRLSTSIRPLVLAPNSI), are a transit peptide targeting the mitochondrion. Ser75 carries the post-translational modification Phosphoserine. The 106-residue stretch at 89-194 (VKSEEEFINA…LKNLMEQLYK (106 aa)) folds into the Thioredoxin domain. Catalysis depends on nucleophile residues Cys118 and Cys121. Cysteines 118 and 121 form a disulfide.

Belongs to the thioredoxin family. Plant O-type subfamily.

The protein localises to the mitochondrion matrix. Functionally, thiol-disulfide oxidoreductase that may participate in various redox reactions. Possesses insulin disulfide bonds reducing activity. Reduced by thioredoxin reductases NTRA and NTRB. The polypeptide is Thioredoxin O1, mitochondrial (Arabidopsis thaliana (Mouse-ear cress)).